An 811-amino-acid polypeptide reads, in one-letter code: MAFLQLFVGLLCGAAVSAFGVDPAVRIGVFQEFSPGQGFSGVTQVKGFRDDTRAFMFQGSSRSVRVPDAAAGHMLQKLRGKTEFSIALTLKQDKLNSGVILSIHHGEHRLLELESSGQKSEVRLHFRTGLQQTHTEIFPFTLADEQWHRVSVSISAAHLTLYVDCNRIYERVVPVPLMEIPEDSSFWVGQRNSAHGLFKGIMQDLQILVMPQGFITQCPDLNRTCPTCNDFHGLVQKIMELQDILAKTSSKLSLAEEKMSGLDSCYCERTCRVKDQIYREEQSWTDGCKNCTCSNGTVRCEKILCPPLDCPDGTTPAYVTGTCCKECQPMCLFSEQTLVEGQSCAVHHPSGLCQLFQCRDRTMHRVPGAEDCPALSCAESDQITLTDRCCRVCRGHDFCAEENICSENSDCVNLDAGASCGCKNGFRPLRLDSAYCEDIDECAEGRHYCRENTECVNTAGSFMCVCHTGFIRIDDYSCTEHDECASGQHDCDENALCFNTVGGHSCSCKPGYSGNGTVCRALCDGRCLNGGSCASPNVCVCVQGFSGQNCETDIDECSEGLVQCAAHATCVNLPGWYHCECRDGYHDNEVFSANGESCRDIDECRTGRSTCANDTVCFNLDGGFDCRCPHGHNCSGDCIHNSRVRHNAQIWVLDTDHCSVCSCQEGQVKCRRMVCDCENPTVDVLCCPECDPRLTSQCLHQNGLLTYSSGDTWIDSCQRCQCLQGEVDCWPLSCPPVDCDFTLVPEGECCPRCVSDPCQAHAVRSDISKTCIDEHGITRFSGSAWVKHGTHCTLCQCKNGHVCCSVDPMCL.

Residues 1-18 (MAFLQLFVGLLCGAAVSA) form the signal peptide. A Laminin G-like domain is found at 54–225 (AFMFQGSSRS…TQCPDLNRTC (172 aa)). Residues Asn-222, Asn-290, and Asn-295 are each glycosylated (N-linked (GlcNAc...) asparagine). In terms of domain architecture, VWFC 1 spans 269 to 328 (RTCRVKDQIYREEQSWTDGCKNCTCSNGTVRCEKILCPPLDCPDGTTPAYVTGTCCKECQ). An EGF-like 1 domain is found at 395–437 (GHDFCAEENICSENSDCVNLDAGASCGCKNGFRPLRLDSAYCE). Intrachain disulfides connect Cys-399–Cys-411, Cys-405–Cys-420, and Cys-422–Cys-436. Positions 438, 439, and 441 each coordinate Ca(2+). The 42-residue stretch at 438 to 479 (DIDECAEGRHYCRENTECVNTAGSFMCVCHTGFIRIDDYSCT) folds into the EGF-like 2; calcium-binding domain. 9 disulfides stabilise this stretch: Cys-442–Cys-455, Cys-449–Cys-464, Cys-466–Cys-478, Cys-484–Cys-497, Cys-491–Cys-506, Cys-508–Cys-519, Cys-523–Cys-533, Cys-527–Cys-539, and Cys-541–Cys-550. Ca(2+) is bound by residues Asn-457, Thr-458, and Ser-461. In terms of domain architecture, EGF-like 3; calcium-binding spans 480–520 (EHDECASGQHDCDENALCFNTVGGHSCSCKPGYSGNGTVCR). Asn-515 carries an N-linked (GlcNAc...) asparagine glycan. The 31-residue stretch at 521 to 551 (ALCDGRCLNGGSCASPNVCVCVQGFSGQNCE) folds into the EGF-like 4 domain. Residues Asp-553, Ile-554, and Glu-556 each contribute to the Ca(2+) site. The 40-residue stretch at 553–592 (DIDECSEGLVQCAAHATCVNLPGWYHCECRDGYHDNEVFS) folds into the EGF-like 5; calcium-binding domain. Intrachain disulfides connect Cys-557–Cys-570, Cys-564–Cys-579, and Cys-581–Cys-598. Asn-572, Leu-573, and Trp-576 together coordinate Ca(2+). Ca(2+) contacts are provided by Asp-600, Ile-601, and Glu-603. One can recognise an EGF-like 6; calcium-binding domain in the interval 600–635 (DIDECRTGRSTCANDTVCFNLDGGFDCRCPHGHNCS). 3 cysteine pairs are disulfide-bonded: Cys-604–Cys-617, Cys-611–Cys-626, and Cys-628–Cys-634. An N-linked (GlcNAc...) asparagine glycan is attached at Asn-613. Residues Asn-619, Leu-620, and Gly-623 each contribute to the Ca(2+) site. Asn-633 is a glycosylation site (N-linked (GlcNAc...) asparagine). VWFC domains are found at residues 636-691 (GDCI…PECD) and 696-754 (SQCL…PRCV).

As to quaternary structure, homotrimer.

The protein resides in the secreted. May regulate neuronal differentiation, polarization and axon guidance. This is Protein kinase C-binding protein NELL2a (nell2a) from Danio rerio (Zebrafish).